A 109-amino-acid polypeptide reads, in one-letter code: Large ribosomal subunit protein uL23 (109 aa).

The protein belongs to the universal ribosomal protein uL23 family. In terms of assembly, part of the 50S ribosomal subunit. Contacts protein L29, and trigger factor when it is bound to the ribosome.

In terms of biological role, one of the early assembly proteins it binds 23S rRNA. One of the proteins that surrounds the polypeptide exit tunnel on the outside of the ribosome. Forms the main docking site for trigger factor binding to the ribosome. This chain is Large ribosomal subunit protein uL23, found in Haemophilus influenzae (strain PittEE).